The sequence spans 487 residues: MSKDMKYLVLENYIGGKFVPCSKLIDSFDPSTGEVYCKVPDSGAEEVNAAVRAAKEAFPDWSAKSPADRSKVLNKLADLIEARLEEFVQAESKDQGKTITFARNVDIPRSAYNFRFFASSVLHHTNDCSQMDHMGCLNYTIRCPVGVAGLISPWNLPLYLLTWKIAPAVATGNTVVAKPSEMTSVTAWMMCQLLEEAGFPPGVVNIVFGTGPRAGDALVSHPDVPLISFTGSTATARLITERSAPHCKKLSLELGGKNPAIIFADADMEQCISTTVRSSFSNQGEICLCTSRIFVERSVYPEFLTRFVEATRRWKTGVPSDPSNDNGALISKEHLQKVKGYITLALAEGAQVHCGEGVDKLALPQQNIGGYFMLPTIISGVKDSSALMQEEIFGPVTCVTPFDEEEEVISRANNVRYGLSATVWSRDVGRVHRVARKLQAGLVWTNCWLVRDLNLPFGGMKHSGIGREGGKDSYHFFTEVKSVTVKH.

231–236 contributes to the NAD(+) binding site; it reads GSTATA. The Proton acceptor role is filled by E253. Residue C287 is the Nucleophile of the active site.

Belongs to the aldehyde dehydrogenase family.

The protein resides in the cytoplasm. The catalysed reaction is 2-aminomuconate 6-semialdehyde + NAD(+) + H2O = (2Z,4E)-2-aminomuconate + NADH + 2 H(+). It participates in amino-acid degradation; L-kynurenine degradation. Its function is as follows. Catalyzes the NAD-dependent oxidation of 2-aminomuconic semialdehyde of the kynurenine metabolic pathway in L-tryptophan degradation. The sequence is that of 2-aminomuconic semialdehyde dehydrogenase (aldh8a1) from Danio rerio (Zebrafish).